The chain runs to 308 residues: Protoheme IX farnesyltransferase (308 aa).

8 consecutive transmembrane segments (helical) span residues 20–40 (LLAY…VTAI), 50–70 (AIHP…AAGA), 102–122 (NALA…WCAT), 124–144 (LLAG…YTLW), 149–169 (TSQN…IGWS), 170–190 (AITG…FFWT), 227–249 (LIYT…WLYG), and 288–308 (YLAV…PTLH).

Belongs to the UbiA prenyltransferase family. Protoheme IX farnesyltransferase subfamily.

The protein resides in the cell membrane. It carries out the reaction heme b + (2E,6E)-farnesyl diphosphate + H2O = Fe(II)-heme o + diphosphate. It participates in porphyrin-containing compound metabolism; heme O biosynthesis; heme O from protoheme: step 1/1. Converts heme B (protoheme IX) to heme O by substitution of the vinyl group on carbon 2 of heme B porphyrin ring with a hydroxyethyl farnesyl side group. This Mycobacterium tuberculosis (strain ATCC 25618 / H37Rv) protein is Protoheme IX farnesyltransferase.